The primary structure comprises 545 residues: Probable bifunctional tRNA threonylcarbamoyladenosine biosynthesis protein (545 aa).

A kae1 region spans residues Met-1–Trp-329. Fe cation contacts are provided by His-112, His-116, and Tyr-133. Residues Tyr-133–Gly-137, Asp-165, Gly-178, Glu-182, and Asn-262 contribute to the L-threonylcarbamoyladenylate site. Asp-290 contacts Fe cation. In terms of domain architecture, Protein kinase spans Ile-344–Leu-545. ATP-binding positions include Ile-350–Ile-358 and Lys-371. Catalysis depends on Asp-463, which acts as the Proton acceptor; for kinase activity.

This sequence in the N-terminal section; belongs to the KAE1 / TsaD family. The protein in the C-terminal section; belongs to the protein kinase superfamily. Tyr protein kinase family. BUD32 subfamily. In terms of assembly, component of the KEOPS complex that consists of Kae1, Bud32, Cgi121 and Pcc1; the whole complex dimerizes. Fe(2+) serves as cofactor.

The protein localises to the cytoplasm. It carries out the reaction L-seryl-[protein] + ATP = O-phospho-L-seryl-[protein] + ADP + H(+). The enzyme catalyses L-threonyl-[protein] + ATP = O-phospho-L-threonyl-[protein] + ADP + H(+). It catalyses the reaction L-threonylcarbamoyladenylate + adenosine(37) in tRNA = N(6)-L-threonylcarbamoyladenosine(37) in tRNA + AMP + H(+). Functionally, required for the formation of a threonylcarbamoyl group on adenosine at position 37 (t(6)A37) in tRNAs that read codons beginning with adenine. Is a component of the KEOPS complex that is probably involved in the transfer of the threonylcarbamoyl moiety of threonylcarbamoyl-AMP (TC-AMP) to the N6 group of A37. The Kae1 domain likely plays a direct catalytic role in this reaction. The Bud32 domain probably displays kinase activity that regulates Kae1 function. The sequence is that of Probable bifunctional tRNA threonylcarbamoyladenosine biosynthesis protein from Methanococcus maripaludis (strain C5 / ATCC BAA-1333).